The chain runs to 298 residues: Tyrosine recombinase XerC (298 aa).

The Core-binding (CB) domain occupies 1–84 (MNHIQEAFLN…TLRTFYEYWM (84 aa)). In terms of domain architecture, Tyr recombinase spans 105–286 (YLPQFFYEEE…SNQQLRKVYL (182 aa)). Residues R145, K169, H238, R241, and H264 contribute to the active site. Y273 functions as the O-(3'-phospho-DNA)-tyrosine intermediate in the catalytic mechanism.

The protein belongs to the 'phage' integrase family. XerC subfamily. Forms a cyclic heterotetrameric complex composed of two molecules of XerC and two molecules of XerD.

The protein resides in the cytoplasm. Its function is as follows. Site-specific tyrosine recombinase, which acts by catalyzing the cutting and rejoining of the recombining DNA molecules. The XerC-XerD complex is essential to convert dimers of the bacterial chromosome into monomers to permit their segregation at cell division. It also contributes to the segregational stability of plasmids. The chain is Tyrosine recombinase XerC from Staphylococcus aureus (strain JH1).